Consider the following 440-residue polypeptide: FAD-dependent monooxygenase FVEG_08293 (440 aa).

Residues 7 to 26 form a helical membrane-spanning segment; it reads EFNVAIVGAGVAGLALAMAL. Glu-37 and Gly-50 together coordinate FAD. Asn-77 is a glycosylation site (N-linked (GlcNAc...) asparagine). Arg-122 is an FAD binding site. Active-site residues include Arg-203 and Tyr-235. FAD is bound by residues Asp-317 and Ala-330.

It belongs to the paxM FAD-dependent monooxygenase family. It depends on FAD as a cofactor.

The protein resides in the membrane. In terms of biological role, FAD-dependent monooxygenase; part of the Fusarium detoxification of benzoxazolinone cluster 1 (FDB1) involved in the degradation of benzoxazolinones produced by the host plant. Maize, wheat, and rye produce the 2 benzoxazinone phytoanticipins 2,4-dihy-droxy-7-methoxy-1,4-benzoxazin-3-one (DIMBOA) and 2,4-dihydroxy-1,4-benzoxazin-3-one (DIBOA) that, due to their inherent instability once released, spontaneously degrade to the more stable corresponding benzoxazolinones, 6-methoxy-2-benzoxazolinone (MBOA) and 2-benzoxazolinone (BOA), respectively. The first step in the detoxification of benzoxazolinones involves the hydrolysis of the cyclic ester bond of benzoxazolinones by the FDB1 cluster gamma-lactamase MBL1 to aminophenols. MBL1 is able to convert BOA into 2-aminophenol (2-AP), as well as MBOA into 5-methoxy-2-aminophenol (2-AMP). The FDB2 cluster N-malonyltransferase FDB2/NAT1 then metabolizes aminophenols via N-malonylation to non-toxic malonamic acids. FDB2/NAT1 converts 2-AP into N-(2-hydroxyphenyl) malonamic acid (HPMA) and 2-AMP into N-(2-hydroxy-4-methoxyphenyl) malonamic acid (HMPMA). The duplicated dienlactone hydrolases DLH1 and DLH2 may provide redundant function for hydrolyzing the lactone moiety in the BOA molecule. The roles of the amidases an other enzymes encoded by the 2 FDB clusters have not been identified so far. This chain is FAD-dependent monooxygenase FVEG_08293, found in Gibberella moniliformis (strain M3125 / FGSC 7600) (Maize ear and stalk rot fungus).